Here is a 361-residue protein sequence, read N- to C-terminus: C3a anaphylatoxin chemotactic receptor (361 aa).

The Extracellular segment spans residues 1–64 (MQQETQAPPL…FASSEVRVIS (64 aa)). Residues N36 and N50 are each glycosylated (N-linked (GlcNAc...) asparagine). A helical membrane pass occupies residues 65–85 (LVVYCLTFLLGVPGNSFVIFI). At 86–96 (AGMKMKRTVNT) the chain is on the cytoplasmic side. Residues 97 to 117 (IWFLNLATADLLCCLSVPLTV) traverse the membrane as a helical segment. At 118 to 134 (AEILLDHHWPYGYAMCK) the chain is on the extracellular side. Cysteines 133 and 210 form a disulfide. A helical membrane pass occupies residues 135–155 (ILPSVIVISMFASVFTLNIIS). Over 156-177 (LDRFTQVITPVWAQNHRSLLLA) the chain is Cytoplasmic. A helical transmembrane segment spans residues 178–198 (RLSCVAVWILALLLSLPFMIL). Residues 199–224 (RRTYEEFNMTVCTFDDDDFTTYGALS) lie on the Extracellular side of the membrane. Residues 225-245 (IVRFVFGFLIPLMSIVTCYGI) traverse the membrane as a helical segment. Topologically, residues 246 to 262 (IARKLGSRHFRSGRAFR) are cytoplasmic. The chain crosses the membrane as a helical span at residues 263-283 (IMLAVIVAFFLCWMPYHVLDL). Topologically, residues 284 to 301 (IRSYGGESSSMVALKVDP) are extracellular. A helical transmembrane segment spans residues 302–322 (LAISLAYVNSCLNPVLYVFMG). Residues 323–361 (QDFKNKVQLSLRRVFERAFSEEGTQISRSTQSQQVHSVL) are Cytoplasmic-facing.

This sequence belongs to the G-protein coupled receptor 1 family.

It localises to the cell membrane. Receptor for the chemotactic and inflammatory peptide anaphylatoxin C3a. This receptor stimulates chemotaxis, granule enzyme release and superoxide anion production. The protein is C3a anaphylatoxin chemotactic receptor (c3ar1) of Danio rerio (Zebrafish).